Reading from the N-terminus, the 24-residue chain is Waglerin-4 (24 aa).

The cysteines at positions 11 and 15 are disulfide-linked.

The protein belongs to the waglerin family. In terms of assembly, monomer. Expressed by the venom gland.

It localises to the secreted. In terms of biological role, waglerin-2 selectively blocks the epsilon subunit of muscle nicotinic acetylcholine receptor (nAChR). Also has effects on rodent ionotropic GABA(A) receptors (GABR), since it potentiates I(GABA) in some neurons and depresses I(GABA) in others. In mice, it elicits tachypnea, ocular proptosis, rapid collapse and spasms, whereas no toxic effects on respiration and blood pressure are observed in rats. Functionally, waglerin-4 selectively blocks the epsilon subunit of muscle nicotinic acetylcholine receptor. It elicits tachypnea, ocular proptosis, rapid collapse and spasms in mice. It causes death by respiratory failure. The protein is Waglerin-4 of Tropidolaemus wagleri (Wagler's pit viper).